We begin with the raw amino-acid sequence, 149 residues long: Glucosamine 6-phosphate N-acetyltransferase (149 aa).

The N-acetyltransferase domain maps to 5–149 (FKIRKLEISD…KSIQMSKYFD (145 aa)). Substrate contacts are provided by residues Thr-27, 75 to 78 (KFLR), and 87 to 89 (EDV). Acetyl-CoA is bound at residue 97 to 102 (GKQLGK). Residue 118-119 (YK) coordinates substrate. Acetyl-CoA is bound at residue 132–134 (YEK).

Belongs to the acetyltransferase family. GNA1 subfamily. As to quaternary structure, homodimer. In terms of tissue distribution, expressed in roots, leaves, stems, cauline leaves, flowers and siliques.

The protein localises to the endoplasmic reticulum membrane. It catalyses the reaction D-glucosamine 6-phosphate + acetyl-CoA = N-acetyl-D-glucosamine 6-phosphate + CoA + H(+). The protein operates within nucleotide-sugar biosynthesis; UDP-N-acetyl-alpha-D-glucosamine biosynthesis; N-acetyl-alpha-D-glucosamine 1-phosphate from alpha-D-glucosamine 6-phosphate (route I): step 1/2. Its function is as follows. Acetyltransferase involved in UDP-N-acetylglucosamine (UDP-GlcNAc) biosynthesis. UDP-GlcNAc is an essential metabolite that serves as an initial sugar donor for N-glycan synthesis and thus plays an important role in protein and lipid glycosylation. The chain is Glucosamine 6-phosphate N-acetyltransferase (GNA1) from Arabidopsis thaliana (Mouse-ear cress).